A 752-amino-acid polypeptide reads, in one-letter code: MEVQKGLIEAFYNTYPLEKAKELDKSPLCSEYELFIKELWPSIVESFHNSTEFETAIRFCCYETARKSEIGLEERLKCLFAILDLLVIGNEINESFCDHLLPFLILEELMDIHTVNECAKLYEYFETRPSLMKGIVSNRGRGPVLLRISNELLRRLSRQENSSFCGRIDILLSKAFPPEERSGANLRGDYNTVHSFGKVELSPPSTPISDRTDLSYHKKLNTLFTAYWDLQCMCSNPPKLLASDTLPKFIDAAGSAIQAFESILQNTFFNGKSNPTIDPNSSSLLSEKYITLDKGFPSKYIYSRSLFEYQLSDEDFRLQAILQLIIIFDFLLDHSKERIERRTLEKWTNKAVIPIVILSDEDTSKLNELSKEAYSFLHTARCGSVQRTIKEIIHIEGNWKLWKGLGCPSLEKPLVDKAAIDEAVEGLKKLTNTPVKLRFAMGNAALSRLWEQAGENTLDDLKKEERYRIPSPESFLSGVKADKFEIEEAVRDDDKHFHEQSLATKTWRAFRSAINSHLQNFSDTGLGDVELLCNSIEGKPTTSKITPSIPPAFDIHIIEGEELLEEMKKRENVKHNSQNFASPMQTDAEGDIVQNEEEKESVEVEEGKHKNDLPKVSPKPPTEGVDSEVNGESLVQVNKVLKSEDDNTSEASKDPSSHVKSPENIEKLKQNDDHFEVTEEITSTINSKISEKQENNVAETILEVTSSPKSSENSQKQSEITKKRGRDEEDEPSDLHSSPKRPKTGEDGEIVL.

Phosphoserine is present on residues serine 202 and serine 582. The segment at 596-752 (EEEKESVEVE…KTGEDGEIVL (157 aa)) is disordered. 2 stretches are compositionally biased toward basic and acidic residues: residues 601–613 (SVEV…KNDL) and 641–677 (LKSE…HFEV). Residues 695–718 (NNVAETILEVTSSPKSSENSQKQS) are compositionally biased toward polar residues. A phosphoserine mark is found at serine 707 and serine 738.

This is an uncharacterized protein from Schizosaccharomyces pombe (strain 972 / ATCC 24843) (Fission yeast).